The sequence spans 287 residues: ATP synthase gamma chain (287 aa).

It belongs to the ATPase gamma chain family. In terms of assembly, F-type ATPases have 2 components, CF(1) - the catalytic core - and CF(0) - the membrane proton channel. CF(1) has five subunits: alpha(3), beta(3), gamma(1), delta(1), epsilon(1). CF(0) has three main subunits: a, b and c.

It localises to the cell membrane. Functionally, produces ATP from ADP in the presence of a proton gradient across the membrane. The gamma chain is believed to be important in regulating ATPase activity and the flow of protons through the CF(0) complex. The chain is ATP synthase gamma chain from Mycoplasmopsis agalactiae (strain NCTC 10123 / CIP 59.7 / PG2) (Mycoplasma agalactiae).